We begin with the raw amino-acid sequence, 129 residues long: Small ribosomal subunit protein uS9 (129 aa).

This sequence belongs to the universal ribosomal protein uS9 family.

This is Small ribosomal subunit protein uS9 from Nitratiruptor sp. (strain SB155-2).